Here is an 846-residue protein sequence, read N- to C-terminus: DNA mismatch repair protein MutS (846 aa).

594 to 601 (GPNMSGKS) contributes to the ATP binding site.

Belongs to the DNA mismatch repair MutS family.

This protein is involved in the repair of mismatches in DNA. It is possible that it carries out the mismatch recognition step. This protein has a weak ATPase activity. This Macrococcus caseolyticus (strain JCSC5402) (Macrococcoides caseolyticum) protein is DNA mismatch repair protein MutS.